A 386-amino-acid polypeptide reads, in one-letter code: Histone-lysine N-methyltransferase SETD7 (386 aa).

Positions methionine 1–glutamate 12 are enriched in acidic residues. The disordered stretch occupies residues methionine 1–aspartate 21. MORN repeat units lie at residues tyrosine 15 to glutamate 38, phenylalanine 39 to threonine 61, leucine 62 to isoleucine 84, and phenylalanine 109 to serine 131. One can recognise an SET domain in the interval glutamate 222–threonine 344. S-adenosyl-L-methionine-binding positions include alanine 234–glutamate 236, asparagine 304, and histidine 305.

Belongs to the class V-like SAM-binding methyltransferase superfamily. Histone-lysine methyltransferase family. SET7 subfamily.

The protein localises to the nucleus. It is found in the chromosome. It carries out the reaction L-lysyl(4)-[histone H3] + S-adenosyl-L-methionine = N(6)-methyl-L-lysyl(4)-[histone H3] + S-adenosyl-L-homocysteine + H(+). The enzyme catalyses L-lysyl-[protein] + S-adenosyl-L-methionine = N(6)-methyl-L-lysyl-[protein] + S-adenosyl-L-homocysteine + H(+). In terms of biological role, histone methyltransferase that specifically monomethylates 'Lys-4' of histone H3. H3 'Lys-4' methylation represents a specific tag for epigenetic transcriptional activation. Plays a central role in the transcriptional activation of genes. Also has methyltransferase activity toward non-histone proteins. In Halocynthia roretzi (Sea squirt), this protein is Histone-lysine N-methyltransferase SETD7 (setd7).